We begin with the raw amino-acid sequence, 76 residues long: Large ribosomal subunit protein bL31 (76 aa).

The Zn(2+) site is built by Cys-16, Cys-18, Cys-37, and Cys-40.

This sequence belongs to the bacterial ribosomal protein bL31 family. Type A subfamily. In terms of assembly, part of the 50S ribosomal subunit. It depends on Zn(2+) as a cofactor.

Functionally, binds the 23S rRNA. This Solibacter usitatus (strain Ellin6076) protein is Large ribosomal subunit protein bL31.